The primary structure comprises 212 residues: General odorant-binding protein 68 (212 aa).

The signal sequence occupies residues 1–28 (MATTIARIGSANWAKLLVLLWLVQLATA). 3 cysteine pairs are disulfide-bonded: C64–C85, C80–C152, and C130–C162.

It belongs to the PBP/GOBP family.

The protein resides in the secreted. In terms of biological role, present in the aqueous fluid surrounding olfactory sensory dendrites and are thought to aid in the capture and transport of hydrophobic odorants into and through this fluid. In Anopheles gambiae (African malaria mosquito), this protein is General odorant-binding protein 68 (Obp68).